Reading from the N-terminus, the 205-residue chain is Rho-related GTP-binding protein RhoQ (205 aa).

16–23 (GDGAVGKT) provides a ligand contact to GTP. Positions 38–46 (YVPTVFDHY) match the Effector region motif. Residues 63 to 67 (DTAGQ) and 121 to 124 (TQID) contribute to the GTP site. Cysteine 202 bears the Cysteine methyl ester mark. Residue cysteine 202 is the site of S-farnesyl cysteine attachment. The propeptide at 203–205 (LIT) is removed in mature form.

This sequence belongs to the small GTPase superfamily. Rho family. In terms of assembly, interacts with EXO70, CDC42EP1, CDC42EP2 and CDC42EP3 in a GTP-dependent manner. Interacts with CDC42EP4, PARD6A, PARD6G (and probably PARD6B) in a GTP-dependent manner. Part of a quaternary complex containing PARD3, some PARD6 protein (PARD6A, PARD6B or PARD6G) and some atypical PKC protein (PRKCI or PRKCZ). Interacts with GOPC. Interacts with ARHGAP33/TCGAP. In terms of processing, may be post-translationally modified by both palmitoylation and polyisoprenylation.

It is found in the cytoplasm. The protein resides in the cell membrane. Its activity is regulated as follows. Regulated by guanine nucleotide exchange factors (GEFs) which promote the exchange of bound GDP for free GTP, GTPase activating proteins (GAPs) which increase the GTP hydrolysis activity, and GDP dissociation inhibitors which inhibit the dissociation of the nucleotide from the GTPase. Functionally, plasma membrane-associated small GTPase which cycles between an active GTP-bound and an inactive GDP-bound state. In active state binds to a variety of effector proteins to regulate cellular responses. Involved in epithelial cell polarization processes. May play a role in CFTR trafficking to the plasma membrane. Causes the formation of thin, actin-rich surface projections called filopodia. The protein is Rho-related GTP-binding protein RhoQ (Rhoq) of Mus musculus (Mouse).